Reading from the N-terminus, the 952-residue chain is Respiratory burst oxidase homolog protein E (952 aa).

Residues 1 to 392 (MKLSPLSFST…QCLILDNWQR (392 aa)) lie on the Cytoplasmic side of the membrane. 2 EF-hand-like regions span residues 211–219 (SKNGLLARD) and 245–256 (RRQKLEKITKDE). 2 EF-hand domains span residues 268–303 (SFDA…SASA) and 312–347 (QAEE…RDAY). D281, N283, D285, K287, and E292 together coordinate Ca(2+). A helical transmembrane segment spans residues 393–413 (SWVLLVWVMLMAILFVWKFLE). At 414 to 475 (YREKAAFKVM…PFDDNINFHK (62 aa)) the chain is on the extracellular side. Residues 431 to 587 (KGAAETLKLN…LLVVVYIMLI (157 aa)) enclose the Ferric oxidoreductase domain. Residues 476–496 (IIACAIAIGILVHAGTHLACD) traverse the membrane as a helical segment. Residues 497–531 (FPRIINSSPEQFVLIASAFNGTKPTFKDLMTGAEG) lie on the Cytoplasmic side of the membrane. Residues 532 to 552 (ITGISMVILTTIAFTLASTHF) form a helical membrane-spanning segment. Over 553–574 (RRNRVRLPAPLDRLTGFNAFWY) the chain is Extracellular. The helical transmembrane segment at 575-595 (THHLLVVVYIMLIVHGTFLFF) threads the bilayer. Residues 596–603 (ADKWYQKT) lie on the Cytoplasmic side of the membrane. Residues 604–621 (TWMYISVPLVLYVAERSL) form a helical membrane-spanning segment. Topologically, residues 622-750 (RACRSKHYSV…PYGAPAQDYR (129 aa)) are extracellular. The FAD-binding FR-type domain maps to 626 to 748 (SKHYSVKILK…DGPYGAPAQD (123 aa)). Residues 751–771 (SYDVLLLIGLGIGATPFISIL) traverse the membrane as a helical segment. The Cytoplasmic segment spans residues 772-952 (KDLLNNSRDE…TRFEFHKEHF (181 aa)).

The protein belongs to the RBOH (TC 5.B.1.3) family. Monomer and homodimer. As to expression, expressed in roots, inflorescences, leaves and stems.

It localises to the membrane. In terms of biological role, calcium-dependent NADPH oxidase that generates superoxide. In Arabidopsis thaliana (Mouse-ear cress), this protein is Respiratory burst oxidase homolog protein E (RBOHE).